A 68-amino-acid chain; its full sequence is U-scoloptoxin(02)-Er1a (68 aa).

A signal peptide spans 1–20 (MIVSLRCCLLLVALLITVET). Intrachain disulfides connect Cys30–Cys52, Cys38–Cys58, and Cys42–Cys60.

Belongs to the invertebrate defensin family. Expressed by the venom gland.

It is found in the secreted. Functionally, antibacterial peptide mostly active against Gram-positive bacteria. In Ethmostigmus rubripes (Giant centipede), this protein is U-scoloptoxin(02)-Er1a.